Consider the following 232-residue polypeptide: Sugar fermentation stimulation protein homolog (232 aa).

Belongs to the SfsA family.

The polypeptide is Sugar fermentation stimulation protein homolog (Acidithiobacillus ferrooxidans (strain ATCC 23270 / DSM 14882 / CIP 104768 / NCIMB 8455) (Ferrobacillus ferrooxidans (strain ATCC 23270))).